The following is a 304-amino-acid chain: Glycine--tRNA ligase alpha subunit (304 aa).

This sequence belongs to the class-II aminoacyl-tRNA synthetase family. In terms of assembly, tetramer of two alpha and two beta subunits.

It is found in the cytoplasm. The catalysed reaction is tRNA(Gly) + glycine + ATP = glycyl-tRNA(Gly) + AMP + diphosphate. This chain is Glycine--tRNA ligase alpha subunit, found in Actinobacillus pleuropneumoniae serotype 3 (strain JL03).